A 1400-amino-acid polypeptide reads, in one-letter code: Tiny macrocysts protein C (1400 aa).

8 helical membrane-spanning segments follow: residues 59–79 (ILTI…GFKQ), 112–132 (IFFW…WYVA), 152–172 (FVST…LIGL), 196–216 (ANLS…IVGF), 240–260 (FDVY…LVDF), 266–286 (SIVY…ILPY), 296–316 (SGFY…MGIN), and 320–340 (TATT…IGYF). Disordered stretches follow at residues 367-393 (FNEI…SKVT) and 683-712 (ERSG…RGKY). Positions 369 to 386 (EITKNEKSKTGDSKEKES) are enriched in basic and acidic residues. Helical transmembrane passes span 726 to 746 (WLMI…LIVL), 975 to 995 (TMLY…AVLF), 1162 to 1182 (VLAI…TYSV), and 1342 to 1362 (VLTS…LLLF).

It is found in the membrane. The chain is Tiny macrocysts protein C (tmcC) from Dictyostelium discoideum (Social amoeba).